We begin with the raw amino-acid sequence, 777 residues long: MAVEPGTSEVRRQHRFDQGSLERYLCRCLPGFPQQPAGALSVRQYSSGQSNPTFYLQKGGQAYVLRKKPHGPLLPNAHKVDREYHVQKALFSAGFPVPEPLLYCSDVSVIGTEFYVMQHVQGRIFRDASLPEVGPAERSALYLAIETLAQLHSFDLRSLGLQGYGRGPGYCRRQVSTWKRQYDAAAHTDIPAMNELAKWLANNLPPDDDEEALIHGDFRIDNIIFHPTEARVLAVLDWELSTTGHPLADLAYATQFYFWPTSLNVLGQGSVFNFKGTIENPSFEELISIYCRCRGISTTIPNLNFFLALSYFKMAGISQGVYARYLIGNASAESSHEFAKMVKPLAEKGLELSKRLSFSSIQHNTSGELFYQSRKGQEVLLKVKQFMKQHVYPAEKEIAEYYAKHGNTEERWKKPPVLERLKEMAKAEGLWNLFLPAVSSLSQLDYALIAEETGKRFFAPEVFNCQAPDTGNMEVLHLYGTEEQKKEWLEPLLEGKISSCFCMTEPDVASSDATNMQCSIERDGNSYVINGKKWWSSGAGNPNCKVAIVMGKTKNSSASRYKQHSMIIVPMDTPGVRLIRPLSVFGYIDEIHGGHFEVHFNDVRVPVSNMILGEGRGFEIAQGRLGPGRIHHCMRSIGAAETALEILCQRAAQRETFGKKLYHHEVVAHWIAECRLSIEQARLLTLKTASKIDTLGNRKARKEVAMTKVVVPRAVLKVIDCAIQVCGGAGVSQDFPLASMFAYIRTLRVADGPDEVHLSTIARWELLDQSKKLTAKI.

FAD is bound by residues 501-511 (FCMTEPDVASS), 509-511 (ASS), 535-537 (WSS), and S537. S511 contacts substrate. 626–629 (GPGR) provides a ligand contact to substrate. Residues R654, Q724, and 724-728 (QVCGG) each bind FAD. Residue G752 coordinates substrate. FAD is bound by residues 753-755 (PDE) and E755.

It belongs to the acyl-CoA dehydrogenase family. As to quaternary structure, homodimer. FAD serves as cofactor.

Its subcellular location is the peroxisome. It is found in the mitochondrion membrane. The enzyme catalyses a 2,3-saturated acyl-CoA + oxidized [electron-transfer flavoprotein] + H(+) = a (2E)-enoyl-CoA + reduced [electron-transfer flavoprotein]. It catalyses the reaction docosanoyl-CoA + oxidized [electron-transfer flavoprotein] + H(+) = (2E)-docosenoyl-CoA + reduced [electron-transfer flavoprotein]. It carries out the reaction tetracosanoyl-CoA + oxidized [electron-transfer flavoprotein] + H(+) = (2E)-tetracosenoyl-CoA + reduced [electron-transfer flavoprotein]. The catalysed reaction is eicosanoyl-CoA + oxidized [electron-transfer flavoprotein] + H(+) = (2E)-eicosenoyl-CoA + reduced [electron-transfer flavoprotein]. The enzyme catalyses hexacosanoyl-CoA + oxidized [electron-transfer flavoprotein] + H(+) = (2E)-hexacosenoyl-CoA + reduced [electron-transfer flavoprotein]. It catalyses the reaction tricosanoyl-CoA + oxidized [electron-transfer flavoprotein] + H(+) = (2E)-tricosenoyl-CoA + reduced [electron-transfer flavoprotein]. It participates in lipid metabolism; fatty acid beta-oxidation. Its function is as follows. Acyl-CoA dehydrogenase, that exhibits maximal activity towards saturated C22-CoA. Probably participates in beta-oxydation and energy production but could also play a role in the metabolism of specific fatty acids to control fatty acids composition of cellular lipids in brain. The polypeptide is Acyl-CoA dehydrogenase family member 11 (ACAD11) (Gallus gallus (Chicken)).